The following is a 1219-amino-acid chain: Disease resistance-like protein DSC1 (1219 aa).

The 168-residue stretch at 9–176 (AEFDVFLSFR…EIAVDTFKKL (168 aa)) folds into the TIR domain. Residue glutamate 83 is part of the active site. One can recognise an NB-ARC domain in the interval 197 to 446 (LEKLLSWEDL…DIACFFRSEN (250 aa)). 216-222 (GMVGIGK) provides a ligand contact to ATP. 11 LRR repeats span residues 468-493 (LVDK…MAKE), 538-563 (TDKI…AFQG), 597-619 (PNEL…DFDP), 620-642 (KNLV…EKDV), 665-689 (AHNL…INCL), 690-713 (EKLI…IKTQ), 733-757 (SENV…QTFR), 759-780 (LALL…LYKL), 804-827 (MESL…MHLS), 854-877 (CSRL…IGGL), and 878-899 (SSLQ…SFNQ).

Belongs to the disease resistance NB-LRR family. Interacts with CAMTA3 and DSC2.

The enzyme catalyses NAD(+) + H2O = ADP-D-ribose + nicotinamide + H(+). TIR-NB-LRR receptor-like protein involved in plant defense. Acts as a trigger of hypersensitive response (HR). Functions as a guard of CAMTA3, a negative regulator of immunity, during pathogen infection. The sequence is that of Disease resistance-like protein DSC1 from Arabidopsis thaliana (Mouse-ear cress).